The chain runs to 442 residues: Radical S-adenosyl methionine domain-containing protein 1, mitochondrial (442 aa).

A mitochondrion-targeting transit peptide spans 1–17 (MVPSGVRTGRWVAAARA). Residues 34-270 (ESASTRAALY…RTVLRDAGFR (237 aa)) form the Radical SAM core domain. Y43 is a binding site for S-adenosyl-L-methionine. [4Fe-4S] cluster-binding residues include C49, C53, and C56. Residues G98, 99-100 (GT), E131, Q158, R170, and D195 each bind S-adenosyl-L-methionine.

The protein belongs to the anaerobic coproporphyrinogen-III oxidase family. HemW subfamily. Requires [4Fe-4S] cluster as cofactor.

It is found in the mitochondrion. Functionally, may be a heme chaperone, appears to bind heme. Homologous bacterial proteins do not have oxygen-independent coproporphyrinogen-III oxidase activity. Binds 1 [4Fe-4S] cluster. The cluster is coordinated with 3 cysteines and an exchangeable S-adenosyl-L-methionine. The sequence is that of Radical S-adenosyl methionine domain-containing protein 1, mitochondrial (Rsad1) from Mus musculus (Mouse).